Reading from the N-terminus, the 204-residue chain is Holliday junction branch migration complex subunit RuvA (204 aa).

The tract at residues 1–64 (MIGRLQGILL…EDAHLLFGFA (64 aa)) is domain I. A domain II region spans residues 65 to 143 (QKTDRTLFRE…GVKQSDFFVE (79 aa)). The interval 144–155 (STHIPLSPSIES) is flexible linker. Residues 156–204 (HSESSSDEAISALIALGYKPVEAEKMVKRVAKPELTSEQVIREALKAAL) are domain III.

This sequence belongs to the RuvA family. Homotetramer. Forms an RuvA(8)-RuvB(12)-Holliday junction (HJ) complex. HJ DNA is sandwiched between 2 RuvA tetramers; dsDNA enters through RuvA and exits via RuvB. An RuvB hexamer assembles on each DNA strand where it exits the tetramer. Each RuvB hexamer is contacted by two RuvA subunits (via domain III) on 2 adjacent RuvB subunits; this complex drives branch migration. In the full resolvosome a probable DNA-RuvA(4)-RuvB(12)-RuvC(2) complex forms which resolves the HJ.

The protein resides in the cytoplasm. The RuvA-RuvB-RuvC complex processes Holliday junction (HJ) DNA during genetic recombination and DNA repair, while the RuvA-RuvB complex plays an important role in the rescue of blocked DNA replication forks via replication fork reversal (RFR). RuvA specifically binds to HJ cruciform DNA, conferring on it an open structure. The RuvB hexamer acts as an ATP-dependent pump, pulling dsDNA into and through the RuvAB complex. HJ branch migration allows RuvC to scan DNA until it finds its consensus sequence, where it cleaves and resolves the cruciform DNA. In Haemophilus influenzae (strain PittEE), this protein is Holliday junction branch migration complex subunit RuvA.